A 712-amino-acid polypeptide reads, in one-letter code: MTSAEKSATRNIYDPSALPDYDTQFIKPDELHQFEKALNAPAAAPLVAINDWRPINQRVRKNRRTKPRRSKDETREGVLYTVLKWPFLFIVFAWITVLGIAYALTRLYIFLYEQCVTWRGKRERLRRELSVQTNYRDWLTAAQALDTHLGNQKWKETDEYAYYDHLTINKVVAQLKQARKAAESEVHNGRSGVSDLPAVEDLCALLEACVKNNFAGVENPRLYSESYSGTKDLVQEYIDEVQACMQLILDSKQIPAEEKYQHFKHLDTNFGRTALCLSGGATFAYYHFGVIRALLDNDVLPEIITGTSGGALVAALVATRTDEELKQLLVPALAYRIRACHEGFTTWVWRWWRTGARFDTVDWARQCSWFCRGSTTFREAYERTGRILNVSCVPSDPHSPTILANYLTSPDCVIWSAVLASAAVPGILNPVVLMTKKRDGTLAPYSFGHKWKDGSLRTDIPIKALNLHFNVNFTIVSQVNPHINLFFFSSRGTVGRPVTHRKGRGWRGGFLGSAIEQYIKLDMNKWLRVLRHLELLPRPLGQDWSEIWLQKFSGTITIWPKSIPSDFYHILSDPSPERLARMLHVGKQSAFPKIQFIKNRLKIENTIMQGLQQSSPGGDRVLLPILSRRLQNRAQEHADAMVERLDHSFPERHSDYKDESHYTEVSDSLSTNSSRPHTPDARRGSIFEEMRRQSAVFFDDPDMYGDEDAIAT.

Residues 1–10 (MTSAEKSATR) show a composition bias toward polar residues. A disordered region spans residues 1 to 20 (MTSAEKSATRNIYDPSALPD). Residues 85 to 105 (WPFLFIVFAWITVLGIAYALT) form a helical membrane-spanning segment. The PNPLA domain occupies 275-466 (LCLSGGATFA…RTDIPIKALN (192 aa)). Positions 306 to 310 (GTSGG) match the GXSXG motif. The Nucleophile role is filled by Ser308. Asp453 (proton acceptor) is an active-site residue. Positions 649-664 (FPERHSDYKDESHYTE) are enriched in basic and acidic residues. The segment at 649 to 686 (FPERHSDYKDESHYTEVSDSLSTNSSRPHTPDARRGSI) is disordered. Polar residues predominate over residues 665–676 (VSDSLSTNSSRP). The segment covering 677–686 (HTPDARRGSI) has biased composition (basic and acidic residues).

Belongs to the PLPL family.

The protein resides in the membrane. In terms of biological role, probable lipid hydrolase. The sequence is that of Patatin-like phospholipase domain-containing protein ACLA_029670 from Aspergillus clavatus (strain ATCC 1007 / CBS 513.65 / DSM 816 / NCTC 3887 / NRRL 1 / QM 1276 / 107).